The primary structure comprises 448 residues: Chromosomal replication initiator protein DnaA (448 aa).

The domain I, interacts with DnaA modulators stretch occupies residues 1–73 (MSTHLTETWE…VNALKLLTSK (73 aa)). Residues 73-109 (KKYNIDFIVTTEEKIEENEKNHNNEKSNIVVNDEMST) are domain II. The domain III, AAA+ region stretch occupies residues 110–326 (MLNPKYTFDS…GALIRIVAFS (217 aa)). Positions 154, 156, 157, and 158 each coordinate ATP. The interval 327–448 (SLTNKEISVD…NELNKRINQK (122 aa)) is domain IV, binds dsDNA.

The protein belongs to the DnaA family. In terms of assembly, oligomerizes as a right-handed, spiral filament on DNA at oriC.

It is found in the cytoplasm. In terms of biological role, plays an essential role in the initiation and regulation of chromosomal replication. ATP-DnaA binds to the origin of replication (oriC) to initiate formation of the DNA replication initiation complex once per cell cycle. Binds the DnaA box (a 9 base pair repeat at the origin) and separates the double-stranded (ds)DNA. Forms a right-handed helical filament on oriC DNA; dsDNA binds to the exterior of the filament while single-stranded (ss)DNA is stabiized in the filament's interior. The ATP-DnaA-oriC complex binds and stabilizes one strand of the AT-rich DNA unwinding element (DUE), permitting loading of DNA polymerase. After initiation quickly degrades to an ADP-DnaA complex that is not apt for DNA replication. Binds acidic phospholipids. This chain is Chromosomal replication initiator protein DnaA, found in Clostridium botulinum (strain 657 / Type Ba4).